We begin with the raw amino-acid sequence, 719 residues long: Protein STRUBBELIG-RECEPTOR FAMILY 6 (719 aa).

An N-terminal signal peptide occupies residues 1 to 29 (MRENWAVVALFTLCIVGFELRFIHGATDA). Residues 30–293 (SDTSALNTLF…SKKSGIGAGA (264 aa)) are Extracellular-facing. LRR repeat units lie at residues 97-118 (SLTE…QFPP), 119-140 (NLQR…SLSQ), 143-164 (PLKY…DFSK), 167-190 (SLTT…SSLT), 191-213 (SLKS…AGLP), and 214-234 (LETL…SLKG). The tract at residues 242–287 (NSFNTGPAPPPPPGTPPIRGSPSRKSGGRESRSSDESTRNGDSKKS) is disordered. Residues 248–257 (PAPPPPPGTP) show a composition bias toward pro residues. Positions 268–286 (GGRESRSSDESTRNGDSKK) are enriched in basic and acidic residues. Residues 294–314 (IAGIIISLLVVTALLVAFFLF) form a helical membrane-spanning segment. At 315–719 (RRKKSKRSSP…GSADTTSDYM (405 aa)) the chain is on the cytoplasmic side. Disordered stretches follow at residues 322-355 (SSPM…SSVE) and 364-383 (SINL…DEDS). Residues 332–354 (NQPFTLASNDFHENNSIQSSSSV) show a composition bias toward polar residues. Ser-377 carries the post-translational modification Phosphoserine. The Protein kinase domain maps to 416–690 (FSVDNLLGEG…SEVVQALVVL (275 aa)). Residues 422 to 430 (LGEGTFGRV) and Lys-444 each bind ATP. A disordered region spans residues 700–719 (TVGVDPSQRAGSADTTSDYM). Positions 708–719 (RAGSADTTSDYM) are enriched in polar residues.

It belongs to the protein kinase superfamily. Ser/Thr protein kinase family. In terms of tissue distribution, expressed in seedlings, roots, stems, leaves, flowers and siliques.

The protein localises to the membrane. This chain is Protein STRUBBELIG-RECEPTOR FAMILY 6 (SRF6), found in Arabidopsis thaliana (Mouse-ear cress).